The primary structure comprises 89 residues: Small ribosomal subunit protein uS14 (89 aa).

It belongs to the universal ribosomal protein uS14 family. As to quaternary structure, part of the 30S ribosomal subunit. Contacts proteins S3 and S10.

Functionally, binds 16S rRNA, required for the assembly of 30S particles and may also be responsible for determining the conformation of the 16S rRNA at the A site. This is Small ribosomal subunit protein uS14 from Streptococcus pneumoniae serotype 2 (strain D39 / NCTC 7466).